Here is a 288-residue protein sequence, read N- to C-terminus: Prepilin leader peptidase/N-methyltransferase (288 aa).

The chain crosses the membrane as a helical span at residues 14-34 (FITLATVLGLLVGSFLNVVVY). Zn(2+)-binding residues include cysteine 71, cysteine 74, cysteine 96, and cysteine 99. 6 helical membrane passes run 103 to 123 (ISVR…VVAW), 127 to 147 (ASVE…LSLI), 158 to 178 (IVLP…WVPL), 182 to 202 (VCGA…FKLV), 227 to 247 (VLPL…VYLL), and 254 to 274 (MGTA…AVLW).

Belongs to the peptidase A24 family. Requires Zn(2+) as cofactor.

The protein resides in the cell inner membrane. It catalyses the reaction Typically cleaves a -Gly-|-Phe- bond to release an N-terminal, basic peptide of 5-8 residues from type IV prepilin, and then N-methylates the new N-terminal amino group, the methyl donor being S-adenosyl-L-methionine.. Its function is as follows. Plays an essential role in type IV pili and type II pseudopili formation by proteolytically removing the leader sequence from substrate proteins and subsequently monomethylating the alpha-amino group of the newly exposed N-terminal phenylalanine. The protein is Prepilin leader peptidase/N-methyltransferase (pilD) of Pseudomonas putida (Arthrobacter siderocapsulatus).